The chain runs to 69 residues: MAKQCEICGKKPLVGNYVSHSNIKTKRVFNPNLQHMRNQFPDGRIKTITICTRCIRSGHVTKPSIHKGS.

Belongs to the bacterial ribosomal protein bL28 family.

The chain is Large ribosomal subunit protein bL28 from Lawsonia intracellularis (strain PHE/MN1-00).